We begin with the raw amino-acid sequence, 476 residues long: Siroheme synthase (476 aa).

The interval 1 to 203 (MNYFPVFADL…RQIEAAKKEL (203 aa)) is precorrin-2 dehydrogenase /sirohydrochlorin ferrochelatase. Residues 22–23 (TI) and 43–44 (QK) contribute to the NAD(+) site. Ser128 is subject to Phosphoserine. A uroporphyrinogen-III C-methyltransferase region spans residues 214-476 (GSVSLVGAGP…LDSLRIERVA (263 aa)). Position 223 (Pro223) interacts with S-adenosyl-L-methionine. The Proton acceptor role is filled by Asp246. Residue Lys268 is the Proton donor of the active site. S-adenosyl-L-methionine contacts are provided by residues 299 to 301 (GGD), Val304, 329 to 330 (TA), Met381, and Gly410.

This sequence in the N-terminal section; belongs to the precorrin-2 dehydrogenase / sirohydrochlorin ferrochelatase family. In the C-terminal section; belongs to the precorrin methyltransferase family.

The catalysed reaction is uroporphyrinogen III + 2 S-adenosyl-L-methionine = precorrin-2 + 2 S-adenosyl-L-homocysteine + H(+). It catalyses the reaction precorrin-2 + NAD(+) = sirohydrochlorin + NADH + 2 H(+). It carries out the reaction siroheme + 2 H(+) = sirohydrochlorin + Fe(2+). It participates in cofactor biosynthesis; adenosylcobalamin biosynthesis; precorrin-2 from uroporphyrinogen III: step 1/1. The protein operates within cofactor biosynthesis; adenosylcobalamin biosynthesis; sirohydrochlorin from precorrin-2: step 1/1. Its pathway is porphyrin-containing compound metabolism; siroheme biosynthesis; precorrin-2 from uroporphyrinogen III: step 1/1. It functions in the pathway porphyrin-containing compound metabolism; siroheme biosynthesis; siroheme from sirohydrochlorin: step 1/1. It participates in porphyrin-containing compound metabolism; siroheme biosynthesis; sirohydrochlorin from precorrin-2: step 1/1. Its function is as follows. Multifunctional enzyme that catalyzes the SAM-dependent methylations of uroporphyrinogen III at position C-2 and C-7 to form precorrin-2 via precorrin-1. Then it catalyzes the NAD-dependent ring dehydrogenation of precorrin-2 to yield sirohydrochlorin. Finally, it catalyzes the ferrochelation of sirohydrochlorin to yield siroheme. The protein is Siroheme synthase of Mannheimia succiniciproducens (strain KCTC 0769BP / MBEL55E).